A 791-amino-acid chain; its full sequence is RAS guanyl-releasing protein 1 (791 aa).

Residues 49–172 form the N-terminal Ras-GEF domain; that stretch reads LGKLSKGASL…RLIDTAQINS (124 aa). The tract at residues 53-106 is ras exchanger motif region; required for transforming activity; sequence SKGASLDELIQMCIQAFDLDGNMGQNNELLQIMLTMHGFLIPSTELLIKLRTLY. In terms of domain architecture, Ras-GEF spans 201–432; it reads EPQELAEHLT…YELSYAREPR (232 aa). 2 EF-hand domains span residues 466-501 and 502-528; these read HVQR…FPFS and FCVM…ASSI. Ca(2+)-binding residues include Asp-479, Asp-481, Asp-483, Tyr-485, Glu-490, Asp-506, Asp-508, Glu-510, and Glu-517. A Phorbol-ester/DAG-type zinc finger spans residues 537–587; the sequence is LHNFQETTYLRPTFCDNCAGFLWGVIKQGYRCKDCGMNCHKQCKELVVFEC. Residues 671-715 form a disordered region; the sequence is TQTENETQSLCLQVPSPPRSRTPDLTSHLPISPMPSPCPSPVPTR. The segment covering 672–681 has biased composition (polar residues); that stretch reads QTENETQSLC. Positions 702-712 are enriched in pro residues; sequence SPMPSPCPSPV. The stretch at 728–783 forms a coiled coil; sequence IRKARAELRGGKAGIQELEKEKVFLKEENTALKIQLKDAHRRVETLRAELRKYVLD.

Belongs to the RASGRP family.

It localises to the cytoplasm. It is found in the cytosol. The protein resides in the cell membrane. The protein localises to the golgi apparatus membrane. Its subcellular location is the endoplasmic reticulum membrane. Its activity is regulated as follows. Regulated by F-actin polymerization and probably by calcium. Functionally, functions as a diacylglycerol (DAG)-regulated nucleotide exchange factor specifically activating Ras through the exchange of bound GDP for GTP. In Xenopus laevis (African clawed frog), this protein is RAS guanyl-releasing protein 1 (rasgrp1).